The primary structure comprises 171 residues: S-ribosylhomocysteine lyase (171 aa).

Residues histidine 54, histidine 58, and cysteine 128 each coordinate Fe cation.

This sequence belongs to the LuxS family. In terms of assembly, homodimer. Requires Fe cation as cofactor.

It carries out the reaction S-(5-deoxy-D-ribos-5-yl)-L-homocysteine = (S)-4,5-dihydroxypentane-2,3-dione + L-homocysteine. Its function is as follows. Involved in the synthesis of autoinducer 2 (AI-2) which is secreted by bacteria and is used to communicate both the cell density and the metabolic potential of the environment. The regulation of gene expression in response to changes in cell density is called quorum sensing. Catalyzes the transformation of S-ribosylhomocysteine (RHC) to homocysteine (HC) and 4,5-dihydroxy-2,3-pentadione (DPD). This is S-ribosylhomocysteine lyase from Edwardsiella ictaluri (strain 93-146).